Reading from the N-terminus, the 413-residue chain is Alpha-1-antitrypsin-like protein CM55-SI (413 aa).

Positions M1–A24 are cleaved as a signal peptide. Residue Q25 is modified to Pyrrolidone carboxylic acid. N-linked (GlcNAc...) asparagine glycans are attached at residues N65, N102, N165, and N266. The RCL stretch occupies residues G368–R387.

This sequence belongs to the serpin family. As to expression, expressed in liver.

This Tamias sibiricus (Siberian chipmunk) protein is Alpha-1-antitrypsin-like protein CM55-SI.